The primary structure comprises 274 residues: Large ribosomal subunit protein uL2 (274 aa).

Disordered regions lie at residues 28-54 and 221-274; these read KPYA…TRHI and RGTA…RTKK. Over residues 39 to 49 the composition is skewed to polar residues; sequence KTGGRNNNGRI.

This sequence belongs to the universal ribosomal protein uL2 family. Part of the 50S ribosomal subunit. Forms a bridge to the 30S subunit in the 70S ribosome.

In terms of biological role, one of the primary rRNA binding proteins. Required for association of the 30S and 50S subunits to form the 70S ribosome, for tRNA binding and peptide bond formation. It has been suggested to have peptidyltransferase activity; this is somewhat controversial. Makes several contacts with the 16S rRNA in the 70S ribosome. The protein is Large ribosomal subunit protein uL2 of Photorhabdus laumondii subsp. laumondii (strain DSM 15139 / CIP 105565 / TT01) (Photorhabdus luminescens subsp. laumondii).